Consider the following 107-residue polypeptide: U1-lycotoxin-Ls1b (107 aa).

Positions 1-20 (MMKVLVVVALLPTLISYSSS) are cleaved as a signal peptide. Residues 21 to 41 (EGIDDLEADELLSLMANEQTR) constitute a propeptide that is removed on maturation. Intrachain disulfides connect Cys44–Cys59, Cys51–Cys68, Cys58–Cys86, and Cys70–Cys84.

The protein belongs to the neurotoxin 19 (CSTX) family. 04 (U1-Lctx) subfamily. In terms of tissue distribution, expressed by the venom gland.

The protein resides in the secreted. The chain is U1-lycotoxin-Ls1b from Lycosa singoriensis (Wolf spider).